The primary structure comprises 213 residues: Phosphoribosyl-dephospho-CoA transferase (213 aa).

Active-site residues include Asp-135 and Asp-137.

Belongs to the MdcG family.

The catalysed reaction is apo-[malonate decarboxylase ACP] + 2'-(5''-triphospho-alpha-D-ribosyl)-3'-dephospho-CoA = holo-[malonate decarboxylase ACP] + diphosphate. Its function is as follows. Transfers 2'-(5-triphosphoribosyl)-3'-dephosphocoenzyme-A to the apo-[acyl-carrier-protein] of the malonate decarboxylase to yield holo-[acyl-carrier-protein]. In Xanthomonas axonopodis pv. citri (strain 306), this protein is Phosphoribosyl-dephospho-CoA transferase.